The sequence spans 584 residues: Potassium-transporting ATPase potassium-binding subunit (584 aa).

The next 10 membrane-spanning stretches (helical) occupy residues 8–28, 65–85, 139–159, 172–192, 262–282, 292–312, 398–418, 440–460, 507–527, and 544–564; these read FLVLIGVILALLLIPTGEFMF, SFAVAMMIFSVIGIVFVFILQ, VQNFMSAAVGMVVLVAFIYGF, VLLLRSIWILLPLSFVIALVL, FTDLVEIVAILLIPVSLCFMF, GIAILIAMMILFVPLLGLGIW, GLYCMLVFVIIAMFIAGLMVG, ILIPIFLILIGTAIAVSITAG, MFVGRYAIAIITLALAGAFVA, and LFIIWVVFTILIIGALSFLPA.

It belongs to the KdpA family. In terms of assembly, the system is composed of three essential subunits: KdpA, KdpB and KdpC.

It localises to the cell membrane. Part of the high-affinity ATP-driven potassium transport (or Kdp) system, which catalyzes the hydrolysis of ATP coupled with the electrogenic transport of potassium into the cytoplasm. This subunit binds the extracellular potassium ions and delivers the ions to the membrane domain of KdpB through an intramembrane tunnel. The sequence is that of Potassium-transporting ATPase potassium-binding subunit from Methanoregula boonei (strain DSM 21154 / JCM 14090 / 6A8).